The following is a 481-amino-acid chain: Tagaturonate/fructuronate epimerase (481 aa).

Asp-161 serves as the catalytic Proton acceptor. An a divalent metal cation-binding site is contributed by His-162. Glu-266 acts as the Proton donor in catalysis. Residues Lys-308 and His-341 each contribute to the a divalent metal cation site.

Belongs to the UxaE family. Requires a divalent metal cation as cofactor.

It catalyses the reaction keto-D-tagaturonate = keto-D-fructuronate. In terms of biological role, catalyzes the epimerization of D-tagaturonate (D-TagA) to D-fructuronate (D-FruA). The protein is Tagaturonate/fructuronate epimerase of Thermotoga maritima (strain ATCC 43589 / DSM 3109 / JCM 10099 / NBRC 100826 / MSB8).